A 315-amino-acid polypeptide reads, in one-letter code: Rhomboid-related protein 4 (315 aa).

Topologically, residues Met-1–His-21 are cytoplasmic. The helical transmembrane segment at Val-22–Phe-42 threads the bilayer. The Extracellular segment spans residues Leu-43–Tyr-106. Residues Val-107–Ala-127 form a helical membrane-spanning segment. Residues Glu-128 to Ser-138 lie on the Cytoplasmic side of the membrane. A helical transmembrane segment spans residues Cys-139–Tyr-157. Residue Ser-144 is the Nucleophile of the active site. Residues Cys-158–Leu-180 lie on the Extracellular side of the membrane. The helical transmembrane segment at Val-181 to Val-201 threads the bilayer. His-195 is a catalytic residue. Topologically, residues Gly-202–Gln-315 are cytoplasmic. Residues Ser-269–Asp-284 form a ubiquitin-binding domain (UBD) region. The segment at Trp-283–Gln-315 is disordered. Residues Ser-300–Gln-315 are compositionally biased toward basic and acidic residues. A VCP/p97-interacting motif (VIM) region spans residues Pro-301–Gln-315.

Belongs to the peptidase S54 family. As to quaternary structure, interacts (via C-terminal domain) with VCP. Interacts with ubiquitin and ubiquitinated proteins. Interacts with BIK and STEAP3. Expressed strongly in testis.

The protein localises to the endoplasmic reticulum membrane. It localises to the mitochondrion membrane. The catalysed reaction is Cleaves type-1 transmembrane domains using a catalytic dyad composed of serine and histidine that are contributed by different transmembrane domains.. Inhibited by aprotinin. In terms of biological role, intramembrane-cleaving serine protease that cleaves single transmembrane or multi-pass membrane proteins in the hydrophobic plane of the membrane, luminal loops and juxtamembrane regions. Involved in regulated intramembrane proteolysis and the subsequent release of functional polypeptides from their membrane anchors. Functional component of endoplasmic reticulum-associated degradation (ERAD) for misfolded membrane proteins. Required for the degradation process of some specific misfolded endoplasmic reticulum (ER) luminal proteins. Participates in the transfer of misfolded proteins from the ER to the cytosol, where they are destroyed by the proteasome in a ubiquitin-dependent manner. Functions in BIK, MPZ, PKD1, PTCRA, RHO, STEAP3 and TRAC processing. Involved in the regulation of exosomal secretion; inhibits the TSAP6-mediated secretion pathway. Involved in the regulation of apoptosis; modulates BIK-mediated apoptotic activity. Also plays a role in the regulation of spermatogenesis; inhibits apoptotic activity in spermatogonia. The protein is Rhomboid-related protein 4 (RHBDD1) of Homo sapiens (Human).